A 590-amino-acid chain; its full sequence is Muscarinic acetylcholine receptor M3 (590 aa).

The Extracellular segment spans residues 1–67 (MTLHSNSTTS…DPLGGHTVWQ (67 aa)). 4 N-linked (GlcNAc...) asparagine glycosylation sites follow: Asn6, Asn15, Asn41, and Asn48. Residues 68 to 91 (VVFIAFLTGILALVTIIGNILVIV) traverse the membrane as a helical segment. Residues 92–104 (SFKVNKQLKTVNN) are Cytoplasmic-facing. A helical membrane pass occupies residues 105–130 (YFLLSLACADLIIGVISMNLFTTYII). Residues 131–142 (MNRWALGNLACD) are Extracellular-facing. A disulfide bridge connects residues Cys141 and Cys221. The chain crosses the membrane as a helical span at residues 143 to 164 (LWLAIDYVASNASVMNLLVISF). Residues 165–184 (DRYFSITRPLTYRAKRTTKR) lie on the Cytoplasmic side of the membrane. Residues 185–206 (AGVMIGLAWVISFVLWAPAILF) form a helical membrane-spanning segment. The Extracellular segment spans residues 207–229 (WQYFVGKRTVPPGECFIQFLSEP). Residues 230-252 (TITFGTAIAAFYMPVTIMTILYW) traverse the membrane as a helical segment. Over 253–491 (RIYKETEKRT…SLVKEKKAAQ (239 aa)) the chain is Cytoplasmic. Positions 275–281 (AETENFV) match the Basolateral sorting signal motif. The interval 323 to 357 (SSEQMDQDHSSSDSWNNNDAAASLENSASSDEEDI) is disordered. The segment covering 334–345 (SDSWNNNDAAAS) has biased composition (low complexity). Ser385 is subject to Phosphoserine. Residues 492-514 (TLSAILLAFIITWTPYNIMVLVN) form a helical membrane-spanning segment. Residues 515–526 (TFCDSCIPKTFW) are Extracellular-facing. A disulfide bridge links Cys517 with Cys520. The chain crosses the membrane as a helical span at residues 527-546 (NLGYWLCYINSTVNPVCYAL). Topologically, residues 547-590 (CNKTFRTTFKMLLLCQCDKKKRRKQQYQQRQSVIFHKRAPEQAL) are cytoplasmic.

Belongs to the G-protein coupled receptor 1 family. Muscarinic acetylcholine receptor subfamily. CHRM3 sub-subfamily. In terms of assembly, homodimer; the dimers can form tetramers. Interacts with NALCN. Interacts with TMEM147.

It is found in the cell membrane. The protein resides in the postsynaptic cell membrane. It localises to the basolateral cell membrane. Its subcellular location is the endoplasmic reticulum membrane. Its function is as follows. The muscarinic acetylcholine receptor mediates various cellular responses, including inhibition of adenylate cyclase, breakdown of phosphoinositides and modulation of potassium channels through the action of G proteins. Primary transducing effect is Pi turnover. The polypeptide is Muscarinic acetylcholine receptor M3 (CHRM3) (Pongo pygmaeus (Bornean orangutan)).